The following is a 459-amino-acid chain: MGKEKTHVNVVVIGHVDSGKSTTTGHLIYKCGGIDKRTIEKFEKEAAELGKGSFKYAWVLDKLKAERERVITIDIALWKFETPKYYVTVIDAPGHRDFIKNMITGTSQADCAILIIAGGTGEFEAGISKDGQTREHALLAFTLGVRQLIVAINKMDSVNWSEDRYNEIVKETSNFIKKVGFNPKAVPFVPISGWNGDNMIEATTNASWYKGWHKETKEGKATGKTLLEAIDAVDPPTRPSDKPLRLPLQDVYKIGGIGTVPVGRVETGVIKPGMVVTFAPAGVTTEVKSVEMHHEQLPEGLPGDNVGFNVKNVSVKEIRRGNVAGDSKNDPPKGCDSFTAQVIIFNHPGQISAGYSPVLDCHTAHIACRFDELIEKIDRRSGKKVEDSPKFVKAGDAAIVRMIPSKPMCVETFTEYPPLGRFAVRDMRQTVAVGVIKSVEKSDKGAGKVTKAAQKAAKK.

Gly2 bears the N,N,N-trimethylglycine mark. N6,N6-dimethyllysine; alternate is present on Lys3. Lys3 carries the N6-methyllysine; alternate modification. The tr-type G domain occupies 5–240 (KTHVNVVVIG…DAVDPPTRPS (236 aa)). Residues 14–21 (GHVDSGKS) are G1. Residue 14–21 (GHVDSGKS) coordinates GTP. Lys30 carries the post-translational modification N6-methyllysine. A G2 region spans residues 70–74 (VITID). An N6,N6,N6-trimethyllysine modification is found at Lys79. Residues 91–94 (DAPG) form a G3 region. GTP contacts are provided by residues 91–95 (DAPGH) and 153–156 (NKMD). The interval 153–156 (NKMD) is G4. Residues 192–194 (SGW) form a G5 region. Position 316 is an N6,N6-dimethyllysine; alternate (Lys316). Position 316 is an N6-methyllysine; alternate (Lys316). N6-methyllysine is present on Lys390.

It belongs to the TRAFAC class translation factor GTPase superfamily. Classic translation factor GTPase family. EF-Tu/EF-1A subfamily.

It localises to the cytoplasm. In terms of biological role, this protein promotes the GTP-dependent binding of aminoacyl-tRNA to the A-site of ribosomes during protein biosynthesis. This chain is Elongation factor 1-alpha (TEF), found in Blastobotrys adeninivorans (Yeast).